We begin with the raw amino-acid sequence, 159 residues long: Urease subunit beta 2 (159 aa).

Residues 1 to 24 are disordered; the sequence is MAKEPTKAAHPQPEQTKTNHKAHR.

This sequence belongs to the urease beta subunit family. As to quaternary structure, heterotrimer of UreA (gamma), UreB (beta) and UreC (alpha) subunits. Three heterotrimers associate to form the active enzyme.

The protein resides in the cytoplasm. The enzyme catalyses urea + 2 H2O + H(+) = hydrogencarbonate + 2 NH4(+). Its pathway is nitrogen metabolism; urea degradation; CO(2) and NH(3) from urea (urease route): step 1/1. Its function is as follows. Disrupting the ure2 operon has no effect on urease activity, or pathogen survival in BALB/c mice when inoculated by gavage, but confers slightly enhanced resistance to low pH killing in vitro. In Brucella suis biovar 1 (strain 1330), this protein is Urease subunit beta 2.